A 122-amino-acid chain; its full sequence is N(2)-fixation sustaining protein CowN (122 aa).

Belongs to the CowN family.

Its function is as follows. Is required to sustain N(2)-dependent growth in the presence of low levels of carbon monoxide (CO). Probably acts by protecting the N(2) fixation ability of the nitrogenase complex, which is inactivated in the presence of CO. The chain is N(2)-fixation sustaining protein CowN from Azorhizobium caulinodans (strain ATCC 43989 / DSM 5975 / JCM 20966 / LMG 6465 / NBRC 14845 / NCIMB 13405 / ORS 571).